The primary structure comprises 357 residues: MVKNGSHLDAETLAMLQNKAISITLPVVYTMVAIISIPGNFFSLWVLCWHIKPKTPSVIFMINLSITDLLLACCFPFQIFYHIQRNHWIFGKTLCSLVTVMFYSNMYSSILTMTCISIERYMGVVYPMKLIKWRRKRYALGACVIMWIFLLLAFYPLESTDLTYEVKELGIITCFDVLKWEMLPNFAAWVAFLLTLFVVLFLIPFIVTVGCYIGTIRKLIQTSSRYGNKQKTRSIYLAIIVLSVFITCFAPNNFILLAHMIVRLFYEGSLYPAYKLTLCLSCLNNCIDPFIYYFASKEFYQKFMQVFRPKVPLSDSLETRRESLFSGRTMSVRSMSSGPMDGLEGVKICLQRQESVF.

Residues 1 to 26 (MVKNGSHLDAETLAMLQNKAISITLP) lie on the Extracellular side of the membrane. N-linked (GlcNAc...) asparagine glycosylation occurs at N4. Residues 27–47 (VVYTMVAIISIPGNFFSLWVL) form a helical membrane-spanning segment. Residues 48–56 (CWHIKPKTP) are Cytoplasmic-facing. Residues 57 to 77 (SVIFMINLSITDLLLACCFPF) form a helical membrane-spanning segment. The Extracellular segment spans residues 78–97 (QIFYHIQRNHWIFGKTLCSL). A disulfide bridge connects residues C95 and C174. A helical transmembrane segment spans residues 98 to 118 (VTVMFYSNMYSSILTMTCISI). The Cytoplasmic portion of the chain corresponds to 119-137 (ERYMGVVYPMKLIKWRRKR). Residues 138-158 (YALGACVIMWIFLLLAFYPLE) traverse the membrane as a helical segment. The Extracellular segment spans residues 159–185 (STDLTYEVKELGIITCFDVLKWEMLPN). The helical transmembrane segment at 186–206 (FAAWVAFLLTLFVVLFLIPFI) threads the bilayer. Residues 207–236 (VTVGCYIGTIRKLIQTSSRYGNKQKTRSIY) lie on the Cytoplasmic side of the membrane. Residues 237 to 257 (LAIIVLSVFITCFAPNNFILL) form a helical membrane-spanning segment. Residues 258–271 (AHMIVRLFYEGSLY) lie on the Extracellular side of the membrane. The chain crosses the membrane as a helical span at residues 272–294 (PAYKLTLCLSCLNNCIDPFIYYF). Residues 295-357 (ASKEFYQKFM…ICLQRQESVF (63 aa)) are Cytoplasmic-facing.

Belongs to the G-protein coupled receptor 1 family.

It localises to the cell membrane. Probable receptor for purines coupled to G-proteins. This is P2Y purinoceptor 8 (P2RY8) from Gallus gallus (Chicken).